The sequence spans 1392 residues: Ankyrin repeat domain-containing protein 30B (1392 aa).

Residues 1–21 form a disordered region; that stretch reads MKRLLAAAGKGVRGPEPPNPF. 5 ANK repeats span residues 72 to 101, 105 to 134, 138 to 167, 171 to 200, and 204 to 233; these read KKRT…QLNV, EGRT…DLNY, YGNT…VIEV, ASLT…NANA, and SKCT…DVFA. Disordered stretches follow at residues 265-292, 558-587, 636-656, 671-690, 830-877, and 904-926; these read PKNP…ERTP, AQMF…VSQK, DRET…PTCG, RETL…PTCG, KEGA…SDSE, and GKIE…QNSV. Composition is skewed to polar residues over residues 267-280 and 576-586; these read NPQN…STGT and DSESPCETVSQ. Basic and acidic residues predominate over residues 636-650; sequence DRETFKAESPDKDGL. Positions 830 to 840 are enriched in polar residues; the sequence is KEGATKTVTGQ. Composition is skewed to basic and acidic residues over residues 864 to 874 and 904 to 915; these read LGRKEDTKSTS and GKIEESPEKPSH. Coiled coils occupy residues 960-1168 and 1270-1318; these read RELK…KQDK and ETQC…QQLV.

As to expression, expressed in brain, breast and testis.

In Homo sapiens (Human), this protein is Ankyrin repeat domain-containing protein 30B (ANKRD30B).